We begin with the raw amino-acid sequence, 294 residues long: MQEAALGMIGATVGGGGDGDAAVVAEQNRQMKGEIATHPMYDQLLAAHVACLRVATPIDQLPIIEAQLSHSHHLLRSYASTAVGFSHHDRQELDNFLAQYVMVLCSFKEQLQQHVRVHAVEAVMACREIENNLHSLTGATLGEGSGATMSEDEDDLQMDFSSDNSGVDFSGGHDMTGFGPLLPTESERSLMERVRQELKLELKQGFKSRIEDVREEIMRKRRAGKLPGDTTTVLKNWWQQHCKWPYPTEDDKAKLVEETGLQLKQINNWFINQRKRNWHNNSHSLTSLKSKRKH.

The ELK domain maps to 197-217 (ELKLELKQGFKSRIEDVREEI). A DNA-binding region (homeobox; TALE-type) is located at residues 218–281 (MRKRRAGKLP…NQRKRNWHNN (64 aa)).

It belongs to the TALE/KNOX homeobox family. As to expression, in roots, stems and cotyledons of one-week old seedlings. In mature plants, in young leaves from first level below flowers as well as in flower buds and open flowers.

The protein localises to the nucleus. Possible developmental regulator. This is Homeobox protein HD1 (HD1) from Brassica napus (Rape).